We begin with the raw amino-acid sequence, 936 residues long: Isoleucine--tRNA ligase (936 aa).

The short motif at 58 to 68 is the 'HIGH' region element; the sequence is PYANGRAHLGT. Glutamate 561 contributes to the L-isoleucyl-5'-AMP binding site. Positions 602-606 match the 'KMSKS' region motif; that stretch reads KMSKS. An ATP-binding site is contributed by lysine 605. Zn(2+) contacts are provided by cysteine 899, cysteine 902, cysteine 919, and cysteine 922.

The protein belongs to the class-I aminoacyl-tRNA synthetase family. IleS type 1 subfamily. As to quaternary structure, monomer. Zn(2+) serves as cofactor.

It is found in the cytoplasm. The enzyme catalyses tRNA(Ile) + L-isoleucine + ATP = L-isoleucyl-tRNA(Ile) + AMP + diphosphate. In terms of biological role, catalyzes the attachment of isoleucine to tRNA(Ile). As IleRS can inadvertently accommodate and process structurally similar amino acids such as valine, to avoid such errors it has two additional distinct tRNA(Ile)-dependent editing activities. One activity is designated as 'pretransfer' editing and involves the hydrolysis of activated Val-AMP. The other activity is designated 'posttransfer' editing and involves deacylation of mischarged Val-tRNA(Ile). The sequence is that of Isoleucine--tRNA ligase from Coxiella burnetii (strain Dugway 5J108-111).